Reading from the N-terminus, the 437-residue chain is MGNLVAIVGRPNVGKSTLFNRLTKTRQAIVNEQAGTTRDRQYGKSEWVGHEFSVVDTGGWVVNSDDVFEEEIRKQVSLAIDEADVILFVVDVVNGVTDLDMAVASILRRTKKPVIMVANKTDNNELQYNAAEFYKLGLGDPYCISALSGSGTGELLDLVVGKFSKEGEELLDEDIPRFAVVGRPNAGKSSIINAFIGEDRNIVTEIAGTTRDSIYTRYEKFGFDFYLVDTAGIRKKNKVSEDLEYYSVIRSIRSIENSDVCILMLDATRGIEGQDLNIFSLIQRNQKGLVVVVNKWDLVENKNAKVMKTYEEAIRSRLAPFVDFPIIFASALTKQRIFKVLETAKEVYQARTTRIPTARLNEEMLPLIEAYPPPSNKGKYIKIKYCTQLPNTQVPSFVFFANLPQYVKEPYKRFLENKIREKWNLSGTPINIFIRQK.

EngA-type G domains lie at 3-167 (NLVA…SKEG) and 176-352 (PRFA…QART). GTP is bound by residues 9 to 16 (GRPNVGKS), 56 to 60 (DTGGW), 119 to 122 (NKTD), 182 to 189 (GRPNAGKS), 229 to 233 (DTAGI), and 294 to 297 (NKWD). Residues 353 to 437 (TRIPTARLNE…TPINIFIRQK (85 aa)) form the KH-like domain.

It belongs to the TRAFAC class TrmE-Era-EngA-EngB-Septin-like GTPase superfamily. EngA (Der) GTPase family. Associates with the 50S ribosomal subunit.

Functionally, GTPase that plays an essential role in the late steps of ribosome biogenesis. This chain is GTPase Der, found in Phocaeicola vulgatus (strain ATCC 8482 / DSM 1447 / JCM 5826 / CCUG 4940 / NBRC 14291 / NCTC 11154) (Bacteroides vulgatus).